We begin with the raw amino-acid sequence, 347 residues long: NADH-ubiquinone oxidoreductase chain 2 (347 aa).

Helical transmembrane passes span 1–21 (MNPIIFFMIMLTIILGTTIVM), 25–45 (HWLTVWMGFEMNMLAIIPMLM), 59–79 (YFLTQATASMLLLLAITINLM), 96–116 (IILTIALAMKLGLAPFHFWVP), 148–168 (IINLDLLLMMGLLSVMIGGWG), 178–198 (IMAYSSIAHMGWMVTILIYNP), 200–220 (LTMLNLTIYIMMTLTMFMLLI), 237–257 (MPLITTMMLTTLLSMGGLPPL), 274–294 (NSIILPTFMAITALLNLYFYM), and 326–346 (LSPLMVISTMTLPLTPMMMIL).

It belongs to the complex I subunit 2 family. In terms of assembly, core subunit of respiratory chain NADH dehydrogenase (Complex I) which is composed of 45 different subunits. Interacts with TMEM242.

It is found in the mitochondrion inner membrane. The enzyme catalyses a ubiquinone + NADH + 5 H(+)(in) = a ubiquinol + NAD(+) + 4 H(+)(out). In terms of biological role, core subunit of the mitochondrial membrane respiratory chain NADH dehydrogenase (Complex I) which catalyzes electron transfer from NADH through the respiratory chain, using ubiquinone as an electron acceptor. Essential for the catalytic activity and assembly of complex I. The polypeptide is NADH-ubiquinone oxidoreductase chain 2 (Gardnerycteris crenulata (Striped hairy-nosed bat)).